The sequence spans 169 residues: MICOS complex subunit MIC19 (169 aa).

Gly2 carries the N-myristoyl glycine lipid modification. Residues 123 to 165 form the CHCH domain; it reads ENVCQDNENEIVRCLQENPGRVLKCAPLTEAFEKCVGEFRQQV. 2 consecutive short sequence motifs (cx9C motif) follow at residues 126 to 136 and 147 to 157; these read CQDNENEIVRC and CAPLTEAFEKC. 2 disulfides stabilise this stretch: Cys126/Cys157 and Cys136/Cys147.

It belongs to the MICOS complex subunit Mic19 family. Metazoan Mic19 subfamily. Component of the mitochondrial contact site and cristae organizing system (MICOS) complex.

The protein resides in the mitochondrion inner membrane. Its function is as follows. Plays a role in maintaining mitochondrial morphology. May act as a component of the MICOS complex, a large protein complex of the mitochondria. The chain is MICOS complex subunit MIC19 from Caenorhabditis elegans.